The chain runs to 399 residues: 4-hydroxy-3-methylbut-2-enyl diphosphate reductase (399 aa).

[4Fe-4S] cluster is bound at residue Cys66. His96 serves as a coordination point for (2E)-4-hydroxy-3-methylbut-2-enyl diphosphate. His96 provides a ligand contact to dimethylallyl diphosphate. His96 contacts isopentenyl diphosphate. Cys157 is a [4Fe-4S] cluster binding site. His185 is a binding site for (2E)-4-hydroxy-3-methylbut-2-enyl diphosphate. Position 185 (His185) interacts with dimethylallyl diphosphate. Position 185 (His185) interacts with isopentenyl diphosphate. Glu187 (proton donor) is an active-site residue. Thr250 provides a ligand contact to (2E)-4-hydroxy-3-methylbut-2-enyl diphosphate. Cys288 is a binding site for [4Fe-4S] cluster. (2E)-4-hydroxy-3-methylbut-2-enyl diphosphate is bound by residues Ser317, Ser318, Asn319, and Ser379. Dimethylallyl diphosphate is bound by residues Ser317, Ser318, Asn319, and Ser379. Residues Ser317, Ser318, Asn319, and Ser379 each coordinate isopentenyl diphosphate.

This sequence belongs to the IspH family. [4Fe-4S] cluster is required as a cofactor.

It catalyses the reaction isopentenyl diphosphate + 2 oxidized [2Fe-2S]-[ferredoxin] + H2O = (2E)-4-hydroxy-3-methylbut-2-enyl diphosphate + 2 reduced [2Fe-2S]-[ferredoxin] + 2 H(+). The enzyme catalyses dimethylallyl diphosphate + 2 oxidized [2Fe-2S]-[ferredoxin] + H2O = (2E)-4-hydroxy-3-methylbut-2-enyl diphosphate + 2 reduced [2Fe-2S]-[ferredoxin] + 2 H(+). Its pathway is isoprenoid biosynthesis; dimethylallyl diphosphate biosynthesis; dimethylallyl diphosphate from (2E)-4-hydroxy-3-methylbutenyl diphosphate: step 1/1. It functions in the pathway isoprenoid biosynthesis; isopentenyl diphosphate biosynthesis via DXP pathway; isopentenyl diphosphate from 1-deoxy-D-xylulose 5-phosphate: step 6/6. Functionally, catalyzes the conversion of 1-hydroxy-2-methyl-2-(E)-butenyl 4-diphosphate (HMBPP) into a mixture of isopentenyl diphosphate (IPP) and dimethylallyl diphosphate (DMAPP). Acts in the terminal step of the DOXP/MEP pathway for isoprenoid precursor biosynthesis. In Synechococcus sp. (strain WH7803), this protein is 4-hydroxy-3-methylbut-2-enyl diphosphate reductase.